The sequence spans 293 residues: uncharacterized protein (293 aa).

The protein belongs to the TolB family.

This is an uncharacterized protein from Agrobacterium fabrum (strain C58 / ATCC 33970) (Agrobacterium tumefaciens (strain C58)).